Consider the following 219-residue polypeptide: Probable nicotinate-nucleotide adenylyltransferase (219 aa).

Belongs to the NadD family.

The enzyme catalyses nicotinate beta-D-ribonucleotide + ATP + H(+) = deamido-NAD(+) + diphosphate. Its pathway is cofactor biosynthesis; NAD(+) biosynthesis; deamido-NAD(+) from nicotinate D-ribonucleotide: step 1/1. Functionally, catalyzes the reversible adenylation of nicotinate mononucleotide (NaMN) to nicotinic acid adenine dinucleotide (NaAD). The sequence is that of Probable nicotinate-nucleotide adenylyltransferase from Hahella chejuensis (strain KCTC 2396).